Reading from the N-terminus, the 512-residue chain is Protein SHC1 (512 aa).

Acidic residues predominate over residues Glu-101–Ala-113. Disordered stretches follow at residues Glu-101–Gln-122 and Asp-144–Ala-164. Sel1-like repeat units follow at residues Pro-318–His-353, Ile-354–His-389, Pro-390–Ser-429, and Cys-433–His-470.

Belongs to the SKT5 family.

The protein resides in the cytoplasm. It is found in the cytoplasmic granule membrane. Its function is as follows. Required for the activation of chitin synthase III (CHS3) activity during the sporulation process. The protein is Protein SHC1 (SHC1) of Saccharomyces cerevisiae (strain ATCC 204508 / S288c) (Baker's yeast).